Here is a 994-residue protein sequence, read N- to C-terminus: Glycine dehydrogenase (decarboxylating) (994 aa).

The segment at 1 to 20 (MTDHAENRCGLEGPRPFSSR) is disordered. N6-(pyridoxal phosphate)lysine is present on Lys716.

Belongs to the GcvP family. In terms of assembly, the glycine cleavage system is composed of four proteins: P, T, L and H. Pyridoxal 5'-phosphate is required as a cofactor.

It carries out the reaction N(6)-[(R)-lipoyl]-L-lysyl-[glycine-cleavage complex H protein] + glycine + H(+) = N(6)-[(R)-S(8)-aminomethyldihydrolipoyl]-L-lysyl-[glycine-cleavage complex H protein] + CO2. In terms of biological role, the glycine cleavage system catalyzes the degradation of glycine. The P protein binds the alpha-amino group of glycine through its pyridoxal phosphate cofactor; CO(2) is released and the remaining methylamine moiety is then transferred to the lipoamide cofactor of the H protein. This Cutibacterium acnes (strain DSM 16379 / KPA171202) (Propionibacterium acnes) protein is Glycine dehydrogenase (decarboxylating).